The chain runs to 254 residues: Probable 2,4-dienoyl-CoA reductase [(2E)-enoyl-CoA-producing] (254 aa).

Residue 6–38 coordinates NADP(+); sequence VIITGGSSGMGKAMAKKQAELGWHVMVTGRNHE. Thr-100 is a binding site for substrate. Tyr-142 (proton acceptor) is an active-site residue. Lys-157 contacts NAD(+).

The protein belongs to the short-chain dehydrogenases/reductases (SDR) family. 2,4-dienoyl-CoA reductase subfamily.

It catalyses the reaction a 4,5-saturated-(2E)-enoyl-CoA + NADP(+) = a (2E,4E)-dienoyl-CoA + NADPH + H(+). The enzyme catalyses a (2E,4Z)-dienoyl-CoA + NADPH + H(+) = a 4,5-saturated-(2E)-enoyl-CoA + NADP(+). The protein operates within lipid metabolism; fatty acid beta-oxidation. Functionally, auxiliary enzyme of beta-oxidation. It participates in the metabolism of unsaturated fatty enoyl-CoA esters having double bonds in both even- and odd-numbered positions. Catalyzes the NADP-dependent reduction of 2,4-dienoyl-CoA to yield trans-3-enoyl-CoA. The protein is Probable 2,4-dienoyl-CoA reductase [(2E)-enoyl-CoA-producing] (fadH) of Bacillus subtilis (strain 168).